We begin with the raw amino-acid sequence, 313 residues long: Protein ABA AND ROS SENSITIVE 1 (313 aa).

The Nuclear localization signal 1 signature appears at 5–12 (AKKKAMFR). A C2H2-type zinc finger spans residues 39–61 (CRVCNVVLKSESLWDVHQASRKH). Positions 115–131 (ARAEVEPAKSKNLEQSK) are enriched in basic and acidic residues. 3 disordered regions span residues 115 to 189 (ARAE…LPTG), 232 to 254 (MEEE…QRSY), and 271 to 313 (ARLA…AQHL). The span at 155 to 176 (TDSSNTKTTSEPKQSQTQTTGP) shows a compositional bias: polar residues. Acidic residues predominate over residues 232–248 (MEEEEVDAAETIEEEEQ). Residues 232–271 (MEEEEVDAAETIEEEEQREQRSYKEKVEILKRKKMELKAA) adopt a coiled-coil conformation. The Nuclear localization signal 2 motif lies at 274-281 (AKRSKTSE). Residues 293 to 305 (ESPSDEEDDEDSA) show a composition bias toward acidic residues.

As to expression, mostly expressed in siliques and, to a lower extent, in roots. Barely deteclable in leaves and stems.

Its subcellular location is the nucleus. It is found in the cytoplasm. Its function is as follows. Essential for breaking seed dormancy before seed germination. Prevents reactive oxygen species (ROS) accumulation in response to abscisic acid (ABA) and oxidative stress, probably by repressing the accumulation of ABA-induced ROS-scavenging enzymes (e.g. CSD3). The polypeptide is Protein ABA AND ROS SENSITIVE 1 (Arabidopsis thaliana (Mouse-ear cress)).